A 432-amino-acid chain; its full sequence is Putative transposase A625R (432 aa).

Residues Cys375, Cys378, Cys393, and Cys395 each contribute to the Zn(2+) site.

In the N-terminal section; belongs to the transposase 2 family. This sequence in the C-terminal section; belongs to the transposase 35 family.

In Chlorella (PBCV-1), this protein is Putative transposase A625R.